The following is a 560-amino-acid chain: Oxygen-dependent choline dehydrogenase (560 aa).

6–35 (DYIIIGGGSAGSVLGGRLSEDVSNNVLVLE) provides a ligand contact to FAD. Histidine 472 (proton acceptor) is an active-site residue.

This sequence belongs to the GMC oxidoreductase family. It depends on FAD as a cofactor.

It catalyses the reaction choline + A = betaine aldehyde + AH2. The catalysed reaction is betaine aldehyde + NAD(+) + H2O = glycine betaine + NADH + 2 H(+). It functions in the pathway amine and polyamine biosynthesis; betaine biosynthesis via choline pathway; betaine aldehyde from choline (cytochrome c reductase route): step 1/1. In terms of biological role, involved in the biosynthesis of the osmoprotectant glycine betaine. Catalyzes the oxidation of choline to betaine aldehyde and betaine aldehyde to glycine betaine at the same rate. The polypeptide is Oxygen-dependent choline dehydrogenase (Staphylococcus xylosus).